Here is a 71-residue protein sequence, read N- to C-terminus: Protein SlyX homolog (71 aa).

The disordered stretch occupies residues 52–71 (RLDQAESSAGAPANERPPHY).

It belongs to the SlyX family.

The polypeptide is Protein SlyX homolog (Rhodopseudomonas palustris (strain ATCC BAA-98 / CGA009)).